Here is a 184-residue protein sequence, read N- to C-terminus: 20.9 kDa protein (184 aa).

The chain is 20.9 kDa protein from Zymomonas mobilis subsp. mobilis (strain ATCC 10988 / DSM 424 / LMG 404 / NCIMB 8938 / NRRL B-806 / ZM1).